The chain runs to 673 residues: Exoribonuclease 2 (673 aa).

The RNB domain maps to 191–516 (RTDLTATPFF…NHRLLKAVIA (326 aa)). Residues 562–645 (DKVFNAEIID…ETRSLIAKPA (84 aa)) form the S1 motif domain. Positions 650–673 (PGPAPVAPTSEADATPADEAPKAE) are disordered.

This sequence belongs to the RNR ribonuclease family. RNase II subfamily.

The protein localises to the cytoplasm. It catalyses the reaction Exonucleolytic cleavage in the 3'- to 5'-direction to yield nucleoside 5'-phosphates.. In terms of biological role, involved in mRNA degradation. Hydrolyzes single-stranded polyribonucleotides processively in the 3' to 5' direction. This Aeromonas hydrophila subsp. hydrophila (strain ATCC 7966 / DSM 30187 / BCRC 13018 / CCUG 14551 / JCM 1027 / KCTC 2358 / NCIMB 9240 / NCTC 8049) protein is Exoribonuclease 2.